Here is a 587-residue protein sequence, read N- to C-terminus: Aspartate--tRNA ligase (587 aa).

Glu174 contributes to the L-aspartate binding site. An aspartate region spans residues 198–201; that stretch reads QITK. Arg220 lines the L-aspartate pocket. ATP is bound by residues 220-222 and Gln229; that span reads RDE. L-aspartate is bound at residue His443. Glu477 is an ATP binding site. Residue Arg484 coordinates L-aspartate. Position 529–532 (529–532) interacts with ATP; that stretch reads GLDR.

Belongs to the class-II aminoacyl-tRNA synthetase family. Type 1 subfamily. In terms of assembly, homodimer.

Its subcellular location is the cytoplasm. The enzyme catalyses tRNA(Asp) + L-aspartate + ATP = L-aspartyl-tRNA(Asp) + AMP + diphosphate. Catalyzes the attachment of L-aspartate to tRNA(Asp) in a two-step reaction: L-aspartate is first activated by ATP to form Asp-AMP and then transferred to the acceptor end of tRNA(Asp). This chain is Aspartate--tRNA ligase, found in Streptococcus pneumoniae serotype 2 (strain D39 / NCTC 7466).